The sequence spans 1324 residues: Tetratricopeptide repeat protein 21 homolog (1324 aa).

TPR repeat units lie at residues 58–91 (PALA…NDVA), 414–446 (SPLY…LVEM), 582–615 (SLYH…PRKE), 669–702 (DQLV…QSNF), 737–770 (PGSY…QSKD), 772–804 (QLAE…YKDK), 806–837 (MRLK…DPEP), 847–880 (IQFL…HSRI), 894–927 (ARIC…HETD), 929–961 (KANL…DPHN), 963–995 (EANS…NPQH), 997–1029 (HALS…NPRC), 1033–1066 (SGYN…AAGW), 1205–1238 (EKCW…NCNC), 1240–1272 (KAFE…TKER), and 1274–1307 (PGFG…NPQY).

This sequence belongs to the TTC21 family. In terms of assembly, component of the IFT complex A (IFT-A) composed of at least che-11, daf-10, dyf-2, ift-139, ift-43 and ifta-1. As to expression, expressed in ciliated sensory neurons in the head and tail.

The protein localises to the cell projection. Its subcellular location is the cilium. The protein resides in the cytoplasm. It is found in the cytoskeleton. It localises to the cilium basal body. The protein localises to the dendrite. Component of the IFT complex A (IFT-A), a complex required for retrograde ciliary transport. In particular, may act redundantly with the intraflagellar transport protein ift-43 to regulate the transport of specific ciliary cargo proteins such as che-3 which are related to motility. Functions in cilia biogenesis. This is Tetratricopeptide repeat protein 21 homolog from Caenorhabditis elegans.